The primary structure comprises 607 residues: 2-isopropylmalate synthase (607 aa).

Residues 1 to 10 (MASFSESLSQ) are compositionally biased toward polar residues. A disordered region spans residues 1-40 (MASFSESLSQDPADAYKSAPSITKPMGPPSPGQPQWNPQR). The 275-residue stretch at 75–349 (PLWCAVDLRD…DPQIDFSNID (275 aa)) folds into the Pyruvate carboxyltransferase domain. The Mg(2+) site is built by Asp-84, His-288, His-290, and Asn-324. Residues 491 to 607 (PVQPLERIKQ…VSAVNRAMPR (117 aa)) form a regulatory domain region.

This sequence belongs to the alpha-IPM synthase/homocitrate synthase family. LeuA type 2 subfamily. In terms of assembly, homodimer. It depends on Mg(2+) as a cofactor.

It is found in the cytoplasm. The catalysed reaction is 3-methyl-2-oxobutanoate + acetyl-CoA + H2O = (2S)-2-isopropylmalate + CoA + H(+). It functions in the pathway amino-acid biosynthesis; L-leucine biosynthesis; L-leucine from 3-methyl-2-oxobutanoate: step 1/4. Its function is as follows. Catalyzes the condensation of the acetyl group of acetyl-CoA with 3-methyl-2-oxobutanoate (2-ketoisovalerate) to form 3-carboxy-3-hydroxy-4-methylpentanoate (2-isopropylmalate). The protein is 2-isopropylmalate synthase of Mycobacterium leprae (strain TN).